The chain runs to 69 residues: Antimicrobial peptide Meucin-18 (69 aa).

The first 16 residues, 1–16, serve as a signal peptide directing secretion; sequence MVIFLAYFLVVNESEA. Residues 38-69 constitute a propeptide that is removed on maturation; it reads ERSVMNRDLENLFDPYQRNLEMDRLLKQLRNY.

Belongs to the non-disulfide-bridged peptide (NDBP) superfamily. Medium-length antimicrobial peptide (group 3) family. In terms of tissue distribution, expressed by the venom gland.

It localises to the secreted. Its subcellular location is the target cell membrane. Functionally, amphipathic peptide that exhibits extensive cytolytic activities against both prokaryotic and eukaryotic cells. Acts by fastly disrupting the bacterial membrane. Is more potent against Gram-positive bacteria than against Gram-negative bacteria, and fungi (LC=25.1-8.3 uM). Shows potent activity against penicillin (MIC=3.0 uM) and methicillin (MIC=1.5-3.0 uM) resistant bacteria. Is lethal to the fungus Beauveria sp (LC=1.9 uM), a highly lethal pathogenic fungus to insects and resistant to many AMPs. Shows hemolytic activity against rabbit erythrocytes (37.7% of inhibition at 6.25 uM) and cytolysis against rat dorsal root ganglions. May act by disrupting the integrity of the bacterial cell membrane. Antibiotic activity is not affected by major negatively charged components of the prokaryotic cell wall (e.g. lipopolysaccharides and lipoteichoic acid). In vivo, intravenous injection into mice tail provokes uncomfortable symptoms with a death rate of 12.5%. In vivo, in a mouse model of lethal peritonitis, shows potent antibiotic activity without cytotoxicity, improving the survival rate. The polypeptide is Antimicrobial peptide Meucin-18 (Mesobuthus eupeus (Lesser Asian scorpion)).